The chain runs to 75 residues: DNA-directed RNA polymerase subunit omega (75 aa).

It belongs to the RNA polymerase subunit omega family. As to quaternary structure, in cyanobacteria the RNAP catalytic core is composed of 2 alpha, 1 beta, 1 beta', 1 gamma and 1 omega subunit. When a sigma factor is associated with the core the holoenzyme is formed, which can initiate transcription.

The enzyme catalyses RNA(n) + a ribonucleoside 5'-triphosphate = RNA(n+1) + diphosphate. Promotes RNA polymerase assembly. Latches the N- and C-terminal regions of the beta' subunit thereby facilitating its interaction with the beta and alpha subunits. This Cyanothece sp. (strain PCC 7425 / ATCC 29141) protein is DNA-directed RNA polymerase subunit omega.